A 356-amino-acid chain; its full sequence is UDP-3-O-acylglucosamine N-acyltransferase (356 aa).

The active-site Proton acceptor is His-251.

This sequence belongs to the transferase hexapeptide repeat family. LpxD subfamily. In terms of assembly, homotrimer.

The catalysed reaction is a UDP-3-O-[(3R)-3-hydroxyacyl]-alpha-D-glucosamine + a (3R)-hydroxyacyl-[ACP] = a UDP-2-N,3-O-bis[(3R)-3-hydroxyacyl]-alpha-D-glucosamine + holo-[ACP] + H(+). It functions in the pathway bacterial outer membrane biogenesis; LPS lipid A biosynthesis. Its function is as follows. Catalyzes the N-acylation of UDP-3-O-acylglucosamine using 3-hydroxyacyl-ACP as the acyl donor. Is involved in the biosynthesis of lipid A, a phosphorylated glycolipid that anchors the lipopolysaccharide to the outer membrane of the cell. This chain is UDP-3-O-acylglucosamine N-acyltransferase, found in Ralstonia nicotianae (strain ATCC BAA-1114 / GMI1000) (Ralstonia solanacearum).